We begin with the raw amino-acid sequence, 342 residues long: MSTLLLQNLLENGTEFYFFIFVLAIVLLIILSVIGKFISLWFQAFVSGTPIPLFNIIGMSLRKIPPREIVNARINLYKAGLKDIHVGDLETHYLAGGHVPNVVEALIAADKANIPLDWRRATAIDLAGRDIKAAVQTSVNPRVIDCPNHGGYITGVAKDGIQLNCRARVTVRTNIAQLVGGATEETIIARVGEGIVSAIGGSDTHKQVLESPQKISKLVLEKGLDSSTAFLILSIDIVEINLGENIGAKLRTDQAESDIRIAKAEAEKRRTMAVAQEQENLAKVRDMEAKLVEAQAAVPLAMAEAFRSGKLGIMDYQRIQNIQSDTDMRNALAKPDSDKKQN.

The next 2 helical transmembrane spans lie at 18–38 (FFIF…GKFI) and 39–59 (SLWF…IIGM).

The protein belongs to the flotillin-like FloA family. As to quaternary structure, homooligomerizes.

The protein resides in the cell membrane. Its subcellular location is the membrane raft. Found in functional membrane microdomains (FMM) that may be equivalent to eukaryotic membrane rafts. FMMs are highly dynamic and increase in number as cells age. Flotillins are thought to be important factors in membrane fluidity. This is Flotillin-like protein FloA from Protochlamydia amoebophila (strain UWE25).